A 110-amino-acid polypeptide reads, in one-letter code: MIKLRLKRFGKKRETSFRLVACNSTSRRDGRPLQELGFYNPRTKETRLDTEALRTRLGQGAQPTDAVRTLLEKGGLLEKKVRPAEVLGKQKQEKERSAKKKDAAASETSE.

Over residues 81–104 (VRPAEVLGKQKQEKERSAKKKDAA) the composition is skewed to basic and acidic residues. The segment at 81 to 110 (VRPAEVLGKQKQEKERSAKKKDAAASETSE) is disordered.

The protein belongs to the bacterial ribosomal protein bS16 family.

This is Small ribosomal subunit protein bS16 from Prochlorococcus marinus (strain NATL2A).